Here is a 392-residue protein sequence, read N- to C-terminus: MTFDLASRLAARRAEHLYRRRPLLQSPQGPEVTVDGERLLAFSSNDYLGLANHPEVIAALQQGAATWGVGGGASHLVIGHSTPHHRLEEALAEFTGRPRALLFSTGYMANLAAVTALVGQGDTVLEDRLNHASLLDAGLLSGARFSRYLHNDASSLAKRLEKASGNTLVVTDGVFSMDGDLADLPALCAEAKRHGAWVMVDDAHGFGPLGATGGGIAEHFGLGIDEVPVLVGTLGKAFGTAGAFVAGSEELIETLIQFARPYIYTTSQPPAVACATLKSLELLRSEGWRREHLNRLVARFREGAARIGLTLMASPTPIQPVLVGSSERALRLSALLRERGILVGAIRPPTVPAGSARLRITLTAAHTDAQLERLLEALAECWALMPEECDDA.

Arg-19 serves as a coordination point for substrate. 106–107 (GY) provides a ligand contact to pyridoxal 5'-phosphate. His-131 is a binding site for substrate. Ser-176, His-204, and Thr-233 together coordinate pyridoxal 5'-phosphate. Lys-236 is modified (N6-(pyridoxal phosphate)lysine). Residue Thr-350 coordinates substrate.

Belongs to the class-II pyridoxal-phosphate-dependent aminotransferase family. BioF subfamily. Homodimer. Pyridoxal 5'-phosphate serves as cofactor.

It carries out the reaction 6-carboxyhexanoyl-[ACP] + L-alanine + H(+) = (8S)-8-amino-7-oxononanoate + holo-[ACP] + CO2. It participates in cofactor biosynthesis; biotin biosynthesis. Functionally, catalyzes the decarboxylative condensation of pimeloyl-[acyl-carrier protein] and L-alanine to produce 8-amino-7-oxononanoate (AON), [acyl-carrier protein], and carbon dioxide. The protein is 8-amino-7-oxononanoate synthase of Stutzerimonas stutzeri (strain A1501) (Pseudomonas stutzeri).